Reading from the N-terminus, the 550-residue chain is CTP synthase (550 aa).

Residues 1–270 (MTKFVFVTGG…DRLICEELRL (270 aa)) are amidoligase domain. Serine 13 provides a ligand contact to CTP. Serine 13 is a binding site for UTP. Residues 14–19 (SLGKGI) and aspartate 71 each bind ATP. Residues aspartate 71 and glutamate 144 each coordinate Mg(2+). CTP is bound by residues 151-153 (DIE), 191-196 (KTKPTQ), and lysine 227. Residues 191-196 (KTKPTQ) and lysine 227 contribute to the UTP site. Positions 295–547 (TIGMVGKYVD…VEAALASQQR (253 aa)) constitute a Glutamine amidotransferase type-1 domain. Glycine 356 contributes to the L-glutamine binding site. Catalysis depends on cysteine 383, which acts as the Nucleophile; for glutamine hydrolysis. L-glutamine-binding positions include 384 to 387 (LGMQ), glutamate 407, and arginine 473. Active-site residues include histidine 520 and glutamate 522.

It belongs to the CTP synthase family. In terms of assembly, homotetramer.

It carries out the reaction UTP + L-glutamine + ATP + H2O = CTP + L-glutamate + ADP + phosphate + 2 H(+). The enzyme catalyses L-glutamine + H2O = L-glutamate + NH4(+). The catalysed reaction is UTP + NH4(+) + ATP = CTP + ADP + phosphate + 2 H(+). Its pathway is pyrimidine metabolism; CTP biosynthesis via de novo pathway; CTP from UDP: step 2/2. With respect to regulation, allosterically activated by GTP, when glutamine is the substrate; GTP has no effect on the reaction when ammonia is the substrate. The allosteric effector GTP functions by stabilizing the protein conformation that binds the tetrahedral intermediate(s) formed during glutamine hydrolysis. Inhibited by the product CTP, via allosteric rather than competitive inhibition. Functionally, catalyzes the ATP-dependent amination of UTP to CTP with either L-glutamine or ammonia as the source of nitrogen. Regulates intracellular CTP levels through interactions with the four ribonucleotide triphosphates. The chain is CTP synthase from Cupriavidus necator (strain ATCC 17699 / DSM 428 / KCTC 22496 / NCIMB 10442 / H16 / Stanier 337) (Ralstonia eutropha).